The primary structure comprises 860 residues: Tetratricopeptide repeat protein 13 (860 aa).

TPR repeat units follow at residues 143–176, 216–248, 249–282, 284–316, 317–350, 352–384, and 386–418; these read TNEELAIAYVLIGSGLYDEAIRHFSTMLQEEPDL, PEVFEQRAEILSPLGRINEAVNDLTKAIQLQPS, ARLYRHRGTLYFISEDYATAHEDFQQSLELNKNQ, IAMLYKGLTFFHRGLLKEAIESFKEALKQKVDF, IDAYKSLGQAYRELGNFEAATESFQKALLLNQNH, QTLQLRGMMLYHHGSLQEALKNFKRCLQLEPYN, and VCQYMKGLSHVAMGQFYEGIKAQTKVMLNDPLP.

The chain is Tetratricopeptide repeat protein 13 (TTC13) from Homo sapiens (Human).